Reading from the N-terminus, the 294-residue chain is MYNAEKKQPTYWQRLKIAFQYVMPQLYLTLAAGWLAKQKWGSVTHFIIKLFAKKYHVNMQEAEKTEFKDYASFNEFFIRPLKSEARKIDENPTALCLPADGRISQCGHIEQQTLLQAKGHSFSLVDLLAGDTELAKEFEHGEFATIYLSPRDYHRVHMPCDATLRKMIYVPGDLFSVNPFLNEHIPNLLARNERVICVFDTEFGTMVQILVGATITASMSTVWAGIINPPRSTEVKEWTYSDESAVQLRKGQEMGAFQLGSTVINLFQADKVELANHLDVGVPVRVGEVLAYKK.

Residues aspartate 100, histidine 157, and serine 261 each act as charge relay system; for autoendoproteolytic cleavage activity in the active site. Serine 261 functions as the Schiff-base intermediate with substrate; via pyruvic acid; for decarboxylase activity in the catalytic mechanism. The residue at position 261 (serine 261) is a Pyruvic acid (Ser); by autocatalysis.

This sequence belongs to the phosphatidylserine decarboxylase family. PSD-B subfamily. Prokaryotic type I sub-subfamily. As to quaternary structure, heterodimer of a large membrane-associated beta subunit and a small pyruvoyl-containing alpha subunit. Pyruvate is required as a cofactor. Is synthesized initially as an inactive proenzyme. Formation of the active enzyme involves a self-maturation process in which the active site pyruvoyl group is generated from an internal serine residue via an autocatalytic post-translational modification. Two non-identical subunits are generated from the proenzyme in this reaction, and the pyruvate is formed at the N-terminus of the alpha chain, which is derived from the carboxyl end of the proenzyme. The autoendoproteolytic cleavage occurs by a canonical serine protease mechanism, in which the side chain hydroxyl group of the serine supplies its oxygen atom to form the C-terminus of the beta chain, while the remainder of the serine residue undergoes an oxidative deamination to produce ammonia and the pyruvoyl prosthetic group on the alpha chain. During this reaction, the Ser that is part of the protease active site of the proenzyme becomes the pyruvoyl prosthetic group, which constitutes an essential element of the active site of the mature decarboxylase.

It localises to the cell membrane. The enzyme catalyses a 1,2-diacyl-sn-glycero-3-phospho-L-serine + H(+) = a 1,2-diacyl-sn-glycero-3-phosphoethanolamine + CO2. It functions in the pathway phospholipid metabolism; phosphatidylethanolamine biosynthesis; phosphatidylethanolamine from CDP-diacylglycerol: step 2/2. Functionally, catalyzes the formation of phosphatidylethanolamine (PtdEtn) from phosphatidylserine (PtdSer). In Histophilus somni (strain 2336) (Haemophilus somnus), this protein is Phosphatidylserine decarboxylase proenzyme.